Consider the following 115-residue polypeptide: uncharacterized protein (115 aa).

The CHCH domain occupies G63–G108. 2 short sequence motifs (cx9C motif) span residues C66–C76 and C90–C100. Intrachain disulfides connect C66–C100 and C76–C90.

This is an uncharacterized protein from Caenorhabditis elegans.